A 253-amino-acid chain; its full sequence is Chromosome-partitioning ATPase Soj (253 aa).

ATP-binding residues include lysine 11, glycine 12, glycine 13, valine 14, glycine 15, lysine 16, threonine 17, threonine 18, proline 211, and asparagine 213. Residue threonine 17 coordinates Mg(2+).

This sequence belongs to the ParA family.

The catalysed reaction is ATP + H2O = ADP + phosphate + H(+). In terms of biological role, ATPase probably involved in chromosome partitioning. Cooperatively binds dsDNA, forming nucleoprotein filaments in a strictly ATP-dependent fashion. In Treponema pallidum (strain Nichols), this protein is Chromosome-partitioning ATPase Soj.